Consider the following 293-residue polypeptide: Tumor necrosis factor receptor superfamily member 13B (293 aa).

Residues Met1 to Ser165 are Extracellular-facing. TNFR-Cys repeat units follow at residues Ser33–Arg67 and Ser70–Cys104. Disulfide bonds link Cys34-Cys47, Cys50-Cys62, Cys54-Cys66, Cys71-Cys86, Cys89-Cys100, and Cys93-Cys104. Positions Pro115 to Ala146 are disordered. Residues Val126 to Arg135 are compositionally biased toward polar residues. A glycan (N-linked (GlcNAc...) asparagine) is linked at Asn128. A helical; Signal-anchor for type III membrane protein transmembrane segment spans residues Thr166–Leu186. The Cytoplasmic segment spans residues Lys187 to Ala293. Residues Pro192–Pro226 are disordered.

In terms of assembly, binds TRAF2, TRAF5 and TRAF6. Binds the NH2-terminal domain of CAMLG with its C-terminus. In terms of tissue distribution, highly expressed in spleen, thymus, small intestine and peripheral blood leukocytes. Expressed in resting B-cells and activated T-cells, but not in resting T-cells.

It is found in the membrane. In terms of biological role, receptor for TNFSF13/APRIL and TNFSF13B/TALL1/BAFF/BLYS that binds both ligands with similar high affinity. Mediates calcineurin-dependent activation of NF-AT, as well as activation of NF-kappa-B and AP-1. Involved in the stimulation of B- and T-cell function and the regulation of humoral immunity. The sequence is that of Tumor necrosis factor receptor superfamily member 13B (TNFRSF13B) from Homo sapiens (Human).